We begin with the raw amino-acid sequence, 652 residues long: DNA ligase (652 aa).

NAD(+) contacts are provided by residues 29–33 (DSDYD), 78–79 (SL), and E107. The active-site N6-AMP-lysine intermediate is the K109. R130, E164, K278, and K302 together coordinate NAD(+). C395, C398, C413, and C418 together coordinate Zn(2+). In terms of domain architecture, BRCT spans 577–652 (NSDAALFGLT…IEDEDWLRQL (76 aa)).

It belongs to the NAD-dependent DNA ligase family. LigA subfamily. The cofactor is Mg(2+). It depends on Mn(2+) as a cofactor.

The catalysed reaction is NAD(+) + (deoxyribonucleotide)n-3'-hydroxyl + 5'-phospho-(deoxyribonucleotide)m = (deoxyribonucleotide)n+m + AMP + beta-nicotinamide D-nucleotide.. DNA ligase that catalyzes the formation of phosphodiester linkages between 5'-phosphoryl and 3'-hydroxyl groups in double-stranded DNA using NAD as a coenzyme and as the energy source for the reaction. It is essential for DNA replication and repair of damaged DNA. In Streptococcus pyogenes serotype M49 (strain NZ131), this protein is DNA ligase.